The sequence spans 295 residues: 4-hydroxy-3-methylbut-2-enyl diphosphate reductase (295 aa).

Cys12 is a binding site for [4Fe-4S] cluster. Residues His43 and His81 each contribute to the (2E)-4-hydroxy-3-methylbut-2-enyl diphosphate site. Dimethylallyl diphosphate is bound by residues His43 and His81. Isopentenyl diphosphate contacts are provided by His43 and His81. Position 103 (Cys103) interacts with [4Fe-4S] cluster. His131 lines the (2E)-4-hydroxy-3-methylbut-2-enyl diphosphate pocket. Residue His131 participates in dimethylallyl diphosphate binding. His131 contacts isopentenyl diphosphate. The Proton donor role is filled by Glu133. Thr171 contributes to the (2E)-4-hydroxy-3-methylbut-2-enyl diphosphate binding site. [4Fe-4S] cluster is bound at residue Cys199. Ser227, Asn229, and Ser272 together coordinate (2E)-4-hydroxy-3-methylbut-2-enyl diphosphate. The dimethylallyl diphosphate site is built by Ser227, Asn229, and Ser272. Isopentenyl diphosphate contacts are provided by Ser227, Asn229, and Ser272.

This sequence belongs to the IspH family. [4Fe-4S] cluster serves as cofactor.

The enzyme catalyses isopentenyl diphosphate + 2 oxidized [2Fe-2S]-[ferredoxin] + H2O = (2E)-4-hydroxy-3-methylbut-2-enyl diphosphate + 2 reduced [2Fe-2S]-[ferredoxin] + 2 H(+). It carries out the reaction dimethylallyl diphosphate + 2 oxidized [2Fe-2S]-[ferredoxin] + H2O = (2E)-4-hydroxy-3-methylbut-2-enyl diphosphate + 2 reduced [2Fe-2S]-[ferredoxin] + 2 H(+). Its pathway is isoprenoid biosynthesis; dimethylallyl diphosphate biosynthesis; dimethylallyl diphosphate from (2E)-4-hydroxy-3-methylbutenyl diphosphate: step 1/1. It participates in isoprenoid biosynthesis; isopentenyl diphosphate biosynthesis via DXP pathway; isopentenyl diphosphate from 1-deoxy-D-xylulose 5-phosphate: step 6/6. Functionally, catalyzes the conversion of 1-hydroxy-2-methyl-2-(E)-butenyl 4-diphosphate (HMBPP) into a mixture of isopentenyl diphosphate (IPP) and dimethylallyl diphosphate (DMAPP). Acts in the terminal step of the DOXP/MEP pathway for isoprenoid precursor biosynthesis. The polypeptide is 4-hydroxy-3-methylbut-2-enyl diphosphate reductase (Symbiobacterium thermophilum (strain DSM 24528 / JCM 14929 / IAM 14863 / T)).